The sequence spans 89 residues: GDVAAGASVFSANCAACHMGGRNVIVANKTLSKSDLAKYLKGFDDDAVAAVAYQVTNGKNAMPGFNGRLSPKQIEDVAAYVVDQAEKGW.

Residues C14, C17, H18, and M62 each coordinate heme c.

Belongs to the cytochrome c family. PetJ subfamily. In terms of assembly, monomer. Homodimer, or even higher oligomerization, in crystal structures. Post-translationally, binds 1 heme c group covalently per subunit.

The protein localises to the cellular thylakoid lumen. Its function is as follows. Functions as an electron carrier between membrane-bound cytochrome b6-f and photosystem I in oxygenic photosynthesis. The chain is Cytochrome c6 (petJ) from Limnospira maxima (Arthrospira maxima).